The primary structure comprises 1005 residues: Mitogen-activated protein kinase kinase kinase 10 (1005 aa).

The 65-residue stretch at 32 to 96 folds into the SH3 domain; it reads VSNPLWMAVF…PSNYVVSDDK (65 aa). In terms of domain architecture, Protein kinase spans 118 to 380; the sequence is LNLDEIIGVG…SCILEQLTTI (263 aa). Residues 124–132 and K145 contribute to the ATP site; that span reads IGVGGFGKV. Residue D242 is the Proton acceptor of the active site. 2 leucine-zipper regions span residues 404 to 425 and 439 to 460; these read IQQM…EEEL and LKRR…ELNI. Disordered regions lie at residues 551–611, 647–676, 712–736, and 758–940; these read SVLK…KHTP, QSDH…QSRR, FQWA…GEDS, and RSLI…AEGA. Basic and acidic residues-rich tracts occupy residues 576–588 and 648–658; these read QKER…RLKT and SDHRSHPEDTA. Basic and acidic residues-rich tracts occupy residues 761 to 786 and 799 to 809; these read IRSD…EDRG and YKVESFKRDPK. The segment covering 810-826 has biased composition (polar residues); it reads QSLTPTHVTVGRNNTTE. Pro residues predominate over residues 862-879; that stretch reads EPSPFPRLPDPHFVFPPP. Positions 915 to 940 are enriched in low complexity; it reads SLSQTHSSSPSSGGGDACSSGSAEGA.

This sequence belongs to the protein kinase superfamily. STE Ser/Thr protein kinase family. MAP kinase kinase kinase subfamily. As to quaternary structure, homodimer. Binds to the GTPase rac1 but not cdc42 or rhoA. Interacts (via kinase domain) with pak1 (via kinase domain). Interacts with the ubiquitin-conjugating enzyme ube2d4. The cofactor is Mg(2+). Autophosphorylation on serine and threonine residues within the activation loop plays a role in enzyme activation. Post-translationally, mono- and poly-ubiquitinated. As to expression, in adults, strongly expressed in the brain and spleen with lower levels in pancreas, heart, muscle and kidney (at protein level). In the developing embryo, expressed at stage 22 in the cement gland. Weakly expressed in the pronephros from stage 24 or 25, with expression increasing in strength by stage 30 and continuing at least until stage 37. Expression in the developing pronephros correlates with epithelialization of the proximal pronephric tubules.

It carries out the reaction L-seryl-[protein] + ATP = O-phospho-L-seryl-[protein] + ADP + H(+). The catalysed reaction is L-threonyl-[protein] + ATP = O-phospho-L-threonyl-[protein] + ADP + H(+). With respect to regulation, homodimerization via the leucine zipper domains is required for autophosphorylation and subsequent activation. Functionally, activates the JUN N-terminal pathway. Essential for pronephros and cement gland development. The chain is Mitogen-activated protein kinase kinase kinase 10 (map3k10) from Xenopus laevis (African clawed frog).